The following is a 22-amino-acid chain: Odorant-binding protein 1 (22 aa).

This sequence belongs to the calycin superfamily. Lipocalin family. As to quaternary structure, homodimer. Post-translationally, the N-terminus is blocked.

Its function is as follows. Binds the chemical odorant, 2-isobutyl-3-methoxypyrazine. The sequence is that of Odorant-binding protein 1 from Oryctolagus cuniculus (Rabbit).